Here is a 271-residue protein sequence, read N- to C-terminus: Putative phosphoenolpyruvate synthase regulatory protein (271 aa).

152 to 159 (GVSRSGKT) is an ADP binding site.

The protein belongs to the pyruvate, phosphate/water dikinase regulatory protein family. PSRP subfamily.

It catalyses the reaction [pyruvate, water dikinase] + ADP = [pyruvate, water dikinase]-phosphate + AMP + H(+). The catalysed reaction is [pyruvate, water dikinase]-phosphate + phosphate + H(+) = [pyruvate, water dikinase] + diphosphate. In terms of biological role, bifunctional serine/threonine kinase and phosphorylase involved in the regulation of the phosphoenolpyruvate synthase (PEPS) by catalyzing its phosphorylation/dephosphorylation. This is Putative phosphoenolpyruvate synthase regulatory protein from Thiocapsa roseopersicina.